A 184-amino-acid polypeptide reads, in one-letter code: Ribosome-recycling factor (184 aa).

Belongs to the RRF family.

Its subcellular location is the cytoplasm. In terms of biological role, responsible for the release of ribosomes from messenger RNA at the termination of protein biosynthesis. May increase the efficiency of translation by recycling ribosomes from one round of translation to another. The chain is Ribosome-recycling factor from Cutibacterium acnes (strain DSM 16379 / KPA171202) (Propionibacterium acnes).